The following is a 485-amino-acid chain: Probable WRKY transcription factor 10 (485 aa).

2 disordered regions span residues 43–62 (IFPQ…QRSG) and 215–293 (ISIE…SKTQ). A compositionally biased stretch (acidic residues) spans 216-264 (SIEDSESEDGNKDDDDEDFQYEDEDEDQYDQDQDVDEDEEEEKDEDNVA). The segment at residues 301 to 366 (SDEDNPNDGY…YDGIHNHPSP (66 aa)) is a DNA-binding region (WRKY). Zn(2+) contacts are provided by C332, C337, H361, and H363. The disordered stretch occupies residues 358–417 (DGIHNHPSPPARRSNSSSRNRSAGATIPQNQNDRTSRLGRAPPTPTPPTPPPSSYTPEEM). The span at 368-380 (ARRSNSSSRNRSA) shows a compositional bias: low complexity. The span at 399–411 (PPTPTPPTPPPSS) shows a compositional bias: pro residues.

It belongs to the WRKY group I family. Interacts with IKU1. As to expression, expressed in male gametophytes (pollen) and in the endosperm of fertilized ovules.

The protein resides in the nucleus. Its function is as follows. Transcription factor. Interacts specifically with the W box (5'-(T)TGAC[CT]-3'), a frequently occurring elicitor-responsive cis-acting element. Modulates seed size by negatively regulating the cellularization of syncytial endosperm. This is Probable WRKY transcription factor 10 (WRKY10) from Arabidopsis thaliana (Mouse-ear cress).